The sequence spans 81 residues: Omega-conotoxin-like 3 (81 aa).

Positions 1 to 22 are cleaved as a signal peptide; it reads MKLTCMMIVAVLFLTASIFITA. The propeptide occupies 23 to 51; it reads DNSRNGIENLPRMRRHEMKKPKASKLNKR. Cystine bridges form between cysteine 53/cysteine 71, cysteine 60/cysteine 75, and cysteine 70/cysteine 79.

It belongs to the conotoxin O1 superfamily. In terms of tissue distribution, expressed by the venom duct.

Its subcellular location is the secreted. Its function is as follows. Omega-conotoxins act at presynaptic membranes, they bind and block voltage-gated calcium channels (Cav). The protein is Omega-conotoxin-like 3 of Conus imperialis (Imperial cone).